The sequence spans 395 residues: Acetyl-CoA acetyltransferase (395 aa).

Cysteine 90 serves as the catalytic Acyl-thioester intermediate. Residues tyrosine 185 and lysine 230 each contribute to the CoA site. Residue tyrosine 185 coordinates K(+). The K(+) site is built by alanine 246, alanine 247, and alanine 249. Serine 250 lines the CoA pocket. Residue valine 347 coordinates K(+). Active-site proton acceptor residues include histidine 351 and cysteine 381.

The protein belongs to the thiolase-like superfamily. Thiolase family. Homotetramer.

It localises to the cytoplasm. It catalyses the reaction 2 acetyl-CoA = acetoacetyl-CoA + CoA. It participates in metabolic intermediate biosynthesis; (R)-mevalonate biosynthesis; (R)-mevalonate from acetyl-CoA: step 1/3. In terms of biological role, acetyl-CoA acetyltransferase; part of the first module of ergosterol biosynthesis pathway that includes the early steps of the pathway, conserved across all eukaryotes, and which results in the formation of mevalonate from acetyl-coenzyme A (acetyl-CoA). Erg10 catalyzes the formation of acetoacetyl-CoA from acetyl-CoA. The first module starts with the action of the cytosolic acetyl-CoA acetyltransferase eg10 that catalyzes the formation of acetoacetyl-CoA. The hydroxymethylglutaryl-CoA synthases erg13 then condenses acetyl-CoA with acetoacetyl-CoA to form HMG-CoA. The rate-limiting step of the early module is the reduction to mevalonate by the 3-hydroxy-3-methylglutaryl-coenzyme A (HMG-CoA) reductases hcs1. The polypeptide is Acetyl-CoA acetyltransferase (erg10) (Schizosaccharomyces pombe (strain 972 / ATCC 24843) (Fission yeast)).